The primary structure comprises 446 residues: MSSSASTIVAIASAAGIGGVGIVRLSGAQSVQIAAQLGIARMQPRHAHYARFRDGQGAVIDDGIALWFNAPHSFTGEDVVELQGHGSPVLLRQLVARCIELGARQARAGEFSERAFLNGKLDLAQAEAIADLIAAGDLRAARAARRALDGVFSRRVDAVADTLTRLRIHVEAAIDFADEPLDTLGGNQLRDGLGQARNVLAQLLRDAERGRKLRDGLHAVLIGPPNAGKSSLLNALAGSDRAIVTDVAGTTRDTLHEAIQLDGFELTLVDTAGLRDGGDAIEREGMRRARAELERADLALVVLDARDPQAARDAIGDAIDAVPRQLWIHNKCDLLGNAVSLDANAIAVSAVTGQGLEQLHIRLRALALGDGVDSVEGEFSARTRHVQALRRAEQHVDAADLELGFEQLELAAEELRLAHEALGEITGKLSADDLLGKIFSSFCIGK.

3 residues coordinate (6S)-5-formyl-5,6,7,8-tetrahydrofolate: Arg-24, Glu-81, and Lys-120. A TrmE-type G domain is found at 216-368 (GLHAVLIGPP…LHIRLRALAL (153 aa)). A K(+)-binding site is contributed by Asn-226. Residues 226 to 231 (NAGKSS), 245 to 251 (TDVAGTT), and 270 to 273 (DTAG) contribute to the GTP site. Residue Ser-230 participates in Mg(2+) binding. Positions 245, 247, and 250 each coordinate K(+). Thr-251 serves as a coordination point for Mg(2+). Residue Lys-446 coordinates (6S)-5-formyl-5,6,7,8-tetrahydrofolate.

The protein belongs to the TRAFAC class TrmE-Era-EngA-EngB-Septin-like GTPase superfamily. TrmE GTPase family. Homodimer. Heterotetramer of two MnmE and two MnmG subunits. K(+) is required as a cofactor.

Its subcellular location is the cytoplasm. Functionally, exhibits a very high intrinsic GTPase hydrolysis rate. Involved in the addition of a carboxymethylaminomethyl (cmnm) group at the wobble position (U34) of certain tRNAs, forming tRNA-cmnm(5)s(2)U34. This is tRNA modification GTPase MnmE from Xanthomonas euvesicatoria pv. vesicatoria (strain 85-10) (Xanthomonas campestris pv. vesicatoria).